The following is a 322-amino-acid chain: Sideroflexin-1 (322 aa).

Ser-2 is subject to N-acetylserine. Over 2–102 (SGELPPNINI…MSAQVPMNMT (101 aa)) the chain is Mitochondrial matrix. Residues 103–120 (ITGCMMTFYRTTPAVLFW) form a helical membrane-spanning segment. Residues 121–146 (QWINQSFNAVVNYTNRSGDAPLTVNE) lie on the Mitochondrial intermembrane side of the membrane. Residues 147–167 (LGTAYVSATTGAVATALGLNA) form a helical membrane-spanning segment. At 168–174 (LTKHVSP) the chain is on the mitochondrial matrix side. The helical transmembrane segment at 175–195 (LIGRFVPFAAVAAANCINIPL) threads the bilayer. At 196–228 (MRQRELKVGIPVTDENGNRLGESANAAKQAITQ) the chain is on the mitochondrial intermembrane side. The chain crosses the membrane as a helical span at residues 229-249 (VVVSRILMAAPGMAIPPFIMN). Over 250 to 266 (TLEKKAFLKRFPWMSAP) the chain is Mitochondrial matrix. A helical transmembrane segment spans residues 267-287 (VQVGIVGFCLVFATPLCCALF). Residues 288 to 322 (PQKSSMSVTSLEAELQARIRETYPELRRVYFNKGL) lie on the Mitochondrial intermembrane side of the membrane.

The protein belongs to the sideroflexin family.

It is found in the mitochondrion inner membrane. It carries out the reaction L-serine(in) = L-serine(out). The enzyme catalyses L-alanine(in) = L-alanine(out). It catalyses the reaction L-cysteine(in) = L-cysteine(out). In terms of biological role, amino acid transporter importing serine, an essential substrate of the mitochondrial branch of the one-carbon pathway, into mitochondria. Mitochondrial serine is then converted to glycine and formate, which exits to the cytosol where it is used to generate the charged folates that serve as one-carbon donors. May also transport other amino acids including alanine and cysteine. In Bos taurus (Bovine), this protein is Sideroflexin-1 (SFXN1).